We begin with the raw amino-acid sequence, 144 residues long: INO80 complex subunit 5 (144 aa).

Residues 1 to 58 (MAAQKKQGERVLPARSTRKRRQLPDMLYYDERTDSYVTPQERSLSEANAQTRPAPNTI) form a disordered region. Positions 35 to 58 (SYVTPQERSLSEANAQTRPAPNTI) are enriched in polar residues.

As to quaternary structure, component of the INO80 chromatin remodeling complex.

It is found in the nucleus. Functionally, component of the INO80 complex which remodels chromatin by shifting nucleosomes and is involved in DNA repair. The protein is INO80 complex subunit 5 (iec5) of Schizosaccharomyces pombe (strain 972 / ATCC 24843) (Fission yeast).